The sequence spans 501 residues: Eukaryotic translation initiation factor 3 subunit E (501 aa).

The region spanning 245–423 (CDLFFYTPYL…ESIESTSTNV (179 aa)) is the PCI domain. Ser-477 and Ser-479 each carry phosphoserine.

This sequence belongs to the eIF-3 subunit E family. Component of the eukaryotic translation initiation factor 3 (eIF-3) complex. The eIF-3 complex appears to include tif32/eif3a, SPAC25G10.08/eif3b, tif33/eif3c, SPBC4C3.07/eif3f, tif35/eif3g and sum1/eif3i. This set of common subunits may also associate exclusively with either moe1/eif3d and int6/eif3e, or with SPAC821.05/eif3h and SPAC1751.03/eif3m. The eIF-3 complex may also include SPAC3A12.13c/eif3j. Also interacts with the proteasome via rpn501/rpn502.

Its subcellular location is the cytoplasm. Functionally, component of the eukaryotic translation initiation factor 3 (eIF-3) complex, which is involved in protein synthesis of a specialized repertoire of mRNAs and, together with other initiation factors, stimulates binding of mRNA and methionyl-tRNAi to the 40S ribosome. The eIF-3 complex specifically targets and initiates translation of a subset of mRNAs involved in cell proliferation (Potential). Required for maintaining the basal level of atf1 and for transcriptional activation of core environmental stress response genes (CESR genes) in response to histidine starvation. May positively regulate proteasome activity. Required for nuclear localization of the proteasome subunit rpn501/rpn502. This chain is Eukaryotic translation initiation factor 3 subunit E (int6), found in Schizosaccharomyces pombe (strain 972 / ATCC 24843) (Fission yeast).